The primary structure comprises 92 residues: Small ribosomal subunit protein bS18 (92 aa).

It belongs to the bacterial ribosomal protein bS18 family. Part of the 30S ribosomal subunit. Forms a tight heterodimer with protein bS6.

Binds as a heterodimer with protein bS6 to the central domain of the 16S rRNA, where it helps stabilize the platform of the 30S subunit. The chain is Small ribosomal subunit protein bS18 from Caulobacter sp. (strain K31).